Here is a 493-residue protein sequence, read N- to C-terminus: Na(+)/H(+) antiporter subunit D (493 aa).

Helical transmembrane passes span 4–23, 30–52, 72–94, 107–126, 130–149, 162–184, 204–226, 233–255, 270–292, 299–321, 325–347, 368–390, 405–427, and 448–470; these read LVIL…ILFA, RVIS…VDVY, LVAD…VCLF, YYFY…AFLT, FNLF…LIVL, YVVI…YSIT, VLNV…FPLY, YFGP…GIYA, FTHT…GAVS, ILSY…YTQL, GAIY…AGAT, WLAW…SGFF, YIIA…KIFI, and LLLP…EPIF.

Belongs to the CPA3 antiporters (TC 2.A.63) subunit D family. As to quaternary structure, forms a heterooligomeric complex that consists of seven subunits: MrpA, MrpB, MrpC, MrpD, MrpE, MrpF and MrpG.

Its subcellular location is the cell membrane. Functionally, mnh complex is a Na(+)Li(+)/H(+) antiporter involved in Na(+) and/or Li(+) excretion and Na(+) resistance. Na(+)/H(+) antiport consumes a transmembrane electrical potential, and is thus inferred to be electrogenic. Does not transport K(+), Ca(2+) or Mg(2+). In terms of biological role, mrp complex is a Na(+)/H(+) antiporter involved in Na(+) excretion and Na(+) resistance. The sequence is that of Na(+)/H(+) antiporter subunit D (mrpD) from Alkalihalophilus pseudofirmus (strain ATCC BAA-2126 / JCM 17055 / OF4) (Bacillus pseudofirmus).